Here is a 124-residue protein sequence, read N- to C-terminus: Holo-[acyl-carrier-protein] synthase (124 aa).

Residues Asp8 and Glu56 each contribute to the Mg(2+) site.

This sequence belongs to the P-Pant transferase superfamily. AcpS family. It depends on Mg(2+) as a cofactor.

The protein localises to the cytoplasm. The catalysed reaction is apo-[ACP] + CoA = holo-[ACP] + adenosine 3',5'-bisphosphate + H(+). Functionally, transfers the 4'-phosphopantetheine moiety from coenzyme A to a Ser of acyl-carrier-protein. This is Holo-[acyl-carrier-protein] synthase from Nitratidesulfovibrio vulgaris (strain ATCC 29579 / DSM 644 / CCUG 34227 / NCIMB 8303 / VKM B-1760 / Hildenborough) (Desulfovibrio vulgaris).